Here is a 718-residue protein sequence, read N- to C-terminus: Exostosin-2 (718 aa).

Residues 1-25 (MCASVKYNIRGPALIPRMKTKHRIY) are Cytoplasmic-facing. A helical; Signal-anchor for type II membrane protein transmembrane segment spans residues 26-46 (YITLFSIVLLGLIATGMFQFW). At 47–718 (PHSIESSNDW…LKSFPNIGSL (672 aa)) the chain is on the lumenal side. Disulfide bonds link C85-C90, C96-C151, C286-C300, and C318-C339. N-linked (GlcNAc...) asparagine glycosylation is present at N288. L461, R465, N490, and N517 together coordinate UDP. 7 residues coordinate UDP-N-acetyl-alpha-D-glucosamine: R465, N490, N517, R522, D538, D539, and D540. The UDP site is built by D538 and D539. D540 contacts Mn(2+). Residues Y582 and S584 each coordinate a protein. Cysteines 626 and 676 form a disulfide. UDP-N-acetyl-alpha-D-glucosamine-binding residues include E627 and D628. N637 carries N-linked (GlcNAc...) asparagine glycosylation. The a protein site is built by K651 and K653. R673 is a UDP-N-acetyl-alpha-D-glucosamine binding site.

Belongs to the glycosyltransferase 47 family. As to quaternary structure, part of the heparan sulfate polymerase, a dimeric complex composed of EXT1 and EXT2. Could also form homooligomeric complexes. Interacts with NDST1. Interacts with GALNT5. The cofactor is Mn(2+). Post-translationally, N-glycosylated at Asn-637. In terms of processing, a soluble form is generated by proteolytic processing. Widely expressed.

It is found in the golgi apparatus membrane. It localises to the golgi apparatus. The protein resides in the cis-Golgi network membrane. The protein localises to the endoplasmic reticulum membrane. Its subcellular location is the secreted. It catalyses the reaction 3-O-{[(1-&gt;4)-beta-D-GlcA-(1-&gt;4)-alpha-D-GlcNAc](n)-(1-&gt;4)-beta-D-GlcA-(1-&gt;3)-beta-D-Gal-(1-&gt;3)-beta-D-Gal-(1-&gt;4)-beta-D-Xyl}-L-seryl-[protein] + UDP-N-acetyl-alpha-D-glucosamine = 3-O-{alpha-D-GlcNAc-[(1-&gt;4)-beta-D-GlcA-(1-&gt;4)-alpha-D-GlcNAc](n)-(1-&gt;4)-beta-D-GlcA-(1-&gt;3)-beta-D-Gal-(1-&gt;3)-beta-D-Gal-(1-&gt;4)-beta-D-Xyl}-L-seryl-[protein] + UDP + H(+). It participates in protein modification; protein glycosylation. Glycosyltransferase forming with EXT1 the heterodimeric heparan sulfate polymerase which catalyzes the elongation of the heparan sulfate glycan backbone. Glycan backbone extension consists in the alternating transfer of (1-&gt;4)-beta-D-GlcA and (1-&gt;4)-alpha-D-GlcNAc residues from their respective UDP-sugar donors. Both EXT1 and EXT2 are required for the full activity of the polymerase since EXT1 bears the N-acetylglucosaminyl-proteoglycan 4-beta-glucuronosyltransferase activity within the complex while EXT2 carries the glucuronosyl-N-acetylglucosaminyl-proteoglycan 4-alpha-N-acetylglucosaminyltransferase activity. Heparan sulfate proteoglycans are ubiquitous components of the extracellular matrix and play an important role in tissue homeostasis and signaling. This Homo sapiens (Human) protein is Exostosin-2.